The chain runs to 147 residues: Deoxyuridine 5'-triphosphate nucleotidohydrolase (147 aa).

Substrate is bound by residues 67–69 (RSG), N80, and 84–86 (LID).

It belongs to the dUTPase family. The cofactor is Mg(2+).

It carries out the reaction dUTP + H2O = dUMP + diphosphate + H(+). Its pathway is pyrimidine metabolism; dUMP biosynthesis; dUMP from dCTP (dUTP route): step 2/2. Its function is as follows. This enzyme is involved in nucleotide metabolism: it produces dUMP, the immediate precursor of thymidine nucleotides and it decreases the intracellular concentration of dUTP so that uracil cannot be incorporated into DNA. The sequence is that of Deoxyuridine 5'-triphosphate nucleotidohydrolase from Dictyoglomus turgidum (strain DSM 6724 / Z-1310).